We begin with the raw amino-acid sequence, 25 residues long: Nicotinic acetylcholine receptor-binding protein Mnn-4 (25 aa).

Cysteine 3 and cysteine 20 are joined by a disulfide.

This sequence belongs to the three-finger toxin family. Short-chain subfamily. As to expression, expressed by the venom gland.

It localises to the secreted. Its function is as follows. Binds and may inhibit nicotinic acetylcholine receptors (nAChR). This chain is Nicotinic acetylcholine receptor-binding protein Mnn-4, found in Micrurus nigrocinctus (Central American coral snake).